Reading from the N-terminus, the 575-residue chain is Estrogen receptor beta (575 aa).

Positions 1–160 are modulating; the sequence is MSSSLSPTLQ…GAVVKRDMHF (160 aa). A disordered region spans residues 108-151; it reads DTKPHTSGRHSSFLSRPKLFGKRPEDGDGDEALDDDDPSSSSSG. Positions 134–145 are enriched in acidic residues; that stretch reads GDGDEALDDDDP. 2 NR C4-type zinc fingers span residues 161–181 and 197–221; these read CVVC…CEGC and CPAT…LRKC. Residues 161-226 constitute a DNA-binding region (nuclear receptor); it reads CVVCHDYASG…RLRKCYEMGM (66 aa). An NR LBD domain is found at 290–526; the sequence is SPEQLVYCIL…DLLLEMLDAN (237 aa). Positions 537 to 549 are enriched in polar residues; that stretch reads VCTDPVTPATSPN. The interval 537–557 is disordered; sequence VCTDPVTPATSPNTPLPPQLH.

This sequence belongs to the nuclear hormone receptor family. NR3 subfamily. In terms of assembly, binds DNA as a homodimer. Can form a heterodimer with ER-alpha. Ovary and testis.

Its subcellular location is the nucleus. Its function is as follows. Binds estrogens with an affinity similar to that of ER-alpha, and activates expression of reporter genes containing estrogen response elements (ERE) in an estrogen-dependent manner. The polypeptide is Estrogen receptor beta (esr2) (Ictalurus punctatus (Channel catfish)).